Consider the following 360-residue polypeptide: Phospho-N-acetylmuramoyl-pentapeptide-transferase (360 aa).

The next 10 membrane-spanning stretches (helical) occupy residues 27–47 (IVSL…LIAW), 72–92 (PTMG…MWAY), 94–114 (SNPY…VGFI), 132–152 (WKYF…FAVG), 168–188 (IMPQ…VGTS), 199–219 (GLAI…AWAT), 235–255 (FAGE…GFLW), 263–283 (VFMG…IAVL), 288–308 (FLLL…ILQV), and 338–358 (VIVR…ATLK).

The protein belongs to the glycosyltransferase 4 family. MraY subfamily. The cofactor is Mg(2+).

The protein localises to the cell inner membrane. It catalyses the reaction UDP-N-acetyl-alpha-D-muramoyl-L-alanyl-gamma-D-glutamyl-meso-2,6-diaminopimeloyl-D-alanyl-D-alanine + di-trans,octa-cis-undecaprenyl phosphate = di-trans,octa-cis-undecaprenyl diphospho-N-acetyl-alpha-D-muramoyl-L-alanyl-D-glutamyl-meso-2,6-diaminopimeloyl-D-alanyl-D-alanine + UMP. Its pathway is cell wall biogenesis; peptidoglycan biosynthesis. In terms of biological role, catalyzes the initial step of the lipid cycle reactions in the biosynthesis of the cell wall peptidoglycan: transfers peptidoglycan precursor phospho-MurNAc-pentapeptide from UDP-MurNAc-pentapeptide onto the lipid carrier undecaprenyl phosphate, yielding undecaprenyl-pyrophosphoryl-MurNAc-pentapeptide, known as lipid I. This chain is Phospho-N-acetylmuramoyl-pentapeptide-transferase, found in Sodalis glossinidius (strain morsitans).